The chain runs to 614 residues: ATP-dependent zinc metalloprotease FtsH (614 aa).

The Cytoplasmic segment spans residues 1–5 (MLPIR). A helical membrane pass occupies residues 6 to 26 (WFLALLAVFLAVAGLDLWFSQ). Over 27-127 (TGARPSSATG…AVSARERTAS (101 aa)) the chain is Periplasmic. The chain crosses the membrane as a helical span at residues 128–148 (IVHAIVHPLGLITLIVGILFV). At 149-614 (VQRYAGRFTA…AQHPPSALAG (466 aa)) the chain is on the cytoplasmic side. 214–221 (GPPGTGKT) serves as a coordination point for ATP. His-436 serves as a coordination point for Zn(2+). The active site involves Glu-437. His-440 and Asp-513 together coordinate Zn(2+).

This sequence in the central section; belongs to the AAA ATPase family. The protein in the C-terminal section; belongs to the peptidase M41 family. As to quaternary structure, homohexamer. It depends on Zn(2+) as a cofactor.

Its subcellular location is the cell inner membrane. Acts as a processive, ATP-dependent zinc metallopeptidase for both cytoplasmic and membrane proteins. Plays a role in the quality control of integral membrane proteins. This chain is ATP-dependent zinc metalloprotease FtsH, found in Opitutus terrae (strain DSM 11246 / JCM 15787 / PB90-1).